Consider the following 1030-residue polypeptide: E3 ubiquitin-protein ligase mib1 (1030 aa).

An MIB/HERC2 1 domain is found at 6–74 (NNRVMMEGVG…AYDVRILDSA (69 aa)). The ZZ-type zinc-finger motif lies at 80-132 (HDGTMCDTCRQQPIIGIRWKCAECTNYDLCTTCYHGDKHHLRHRFYRITTPGS). Zn(2+) is bound by residues C85, C88, C100, C103, C109, C112, H118, and H122. One can recognise an MIB/HERC2 2 domain in the interval 143–221 (SKKITARGIF…MSDLKCVQDA (79 aa)). ANK repeat units lie at residues 430 to 460 (DINE…DVNG), 463 to 492 (AGHT…DLEA), 496 to 525 (DGDR…DLNA), 529 to 558 (RRQT…HPSL), 562 to 591 (EGDT…DVTI), 595 to 627 (NGFN…IVDE), 631 to 661 (DGYT…NLDV), 665 to 694 (NQQT…KLDV), and 698 to 727 (DGDT…VSKV). 2 consecutive RING-type zinc fingers follow at residues 817–852 (CMVC…LICK) and 864–899 (CVVC…VQCR). The stretch at 957-986 (ALQRDKDNTNVNADVQKLQQQLQDIKEQTM) forms a coiled coil. An RING-type 3 zinc finger spans residues 987-1020 (CPVCLDRLKNMIFMCGHGTCQLCGDRMSECPICR).

As to quaternary structure, interacts with deltaA (dla) and deltaD (dld).

It is found in the cytoplasm. The protein resides in the cytoskeleton. The protein localises to the microtubule organizing center. It localises to the centrosome. Its subcellular location is the centriolar satellite. It is found in the cell membrane. The catalysed reaction is S-ubiquitinyl-[E2 ubiquitin-conjugating enzyme]-L-cysteine + [acceptor protein]-L-lysine = [E2 ubiquitin-conjugating enzyme]-L-cysteine + N(6)-ubiquitinyl-[acceptor protein]-L-lysine.. The protein operates within protein modification; protein ubiquitination. In terms of biological role, E3 ubiquitin-protein ligase that mediates ubiquitination of Delta receptors, which act as ligands of Notch proteins. Positively regulates the Delta-mediated Notch signaling by ubiquitinating the intracellular domain of Delta, leading to endocytosis of Delta receptors. It thereby participates in many processes regulated by the Notch signaling pathway, such as midline cell fate specification prior to germ layer formation, patterning of sensory cell differentiation in the ear, neurogenesis of the hindbrain and commitment to a secretory fate in the intestine. Essential for early embryonic development. The chain is E3 ubiquitin-protein ligase mib1 (mib1) from Danio rerio (Zebrafish).